Consider the following 443-residue polypeptide: Sensor histidine protein kinase HK06 (443 aa).

Helical transmembrane passes span 16-36 and 140-160; these read FAILGGVGLVIHIAIYLTFPF and ILLLYLPYTFLVTIAFSFVFS. The HAMP domain maps to 165–217; it reads KRLLNPLFYISEVTSKMQDLDDNIRFDESRKDEVGEVGKQINGMYEHLLKVIH. One can recognise a Histidine kinase domain in the interval 239 to 443; it reads GASHELKTPL…EHGMEFKISL (205 aa). At histidine 242 the chain carries Phosphohistidine; by autocatalysis.

It is found in the cell membrane. The catalysed reaction is ATP + protein L-histidine = ADP + protein N-phospho-L-histidine.. Functionally, member of the two-component regulatory system HK06/RR06 involved in regulation of target genes, including choline-binding protein CbpA. Has been shown in one study to not be required for regulation of expression of choline-binding protein CbpA. This is Sensor histidine protein kinase HK06 from Streptococcus pneumoniae serotype 2 (strain D39 / NCTC 7466).